The chain runs to 62 residues: uncharacterized protein (62 aa).

Its subcellular location is the plastid. The protein localises to the chloroplast. This is an uncharacterized protein from Guillardia theta (Cryptophyte).